The chain runs to 275 residues: Thiazole synthase (275 aa).

The active-site Schiff-base intermediate with DXP is Lys108. 1-deoxy-D-xylulose 5-phosphate-binding positions include Gly169, 196–197 (AG), and 218–219 (NT).

The protein belongs to the ThiG family. As to quaternary structure, homotetramer. Forms heterodimers with either ThiH or ThiS.

It localises to the cytoplasm. The catalysed reaction is [ThiS sulfur-carrier protein]-C-terminal-Gly-aminoethanethioate + 2-iminoacetate + 1-deoxy-D-xylulose 5-phosphate = [ThiS sulfur-carrier protein]-C-terminal Gly-Gly + 2-[(2R,5Z)-2-carboxy-4-methylthiazol-5(2H)-ylidene]ethyl phosphate + 2 H2O + H(+). It functions in the pathway cofactor biosynthesis; thiamine diphosphate biosynthesis. Catalyzes the rearrangement of 1-deoxy-D-xylulose 5-phosphate (DXP) to produce the thiazole phosphate moiety of thiamine. Sulfur is provided by the thiocarboxylate moiety of the carrier protein ThiS. In vitro, sulfur can be provided by H(2)S. The protein is Thiazole synthase of Ralstonia pickettii (strain 12J).